A 179-amino-acid polypeptide reads, in one-letter code: Laminin-binding fimbrial subunit ElfA (179 aa).

A signal peptide spans 1–21; that stretch reads MKKSVLTAFITVVCATSSVMA.

It belongs to the fimbrial protein family.

The protein resides in the fimbrium. Functionally, part of the elfADCG fimbrial operon, which could be required for adherence to host epithelial cells. ElfA is an accessory colonization factor that contributes to adherence of bacteria to human intestinal epithelial cells and to animal intestinal tissue in vitro. Binds specifically to laminin, but not to fibronectin or collagen type IV. This Escherichia coli O157:H7 protein is Laminin-binding fimbrial subunit ElfA (elfA).